The following is a 120-amino-acid chain: Large ribosomal subunit protein uL18 (120 aa).

The interval 1–23 (MKLSRKESVRRRHQRVRRKINGT) is disordered. The span at 8–20 (SVRRRHQRVRRKI) shows a compositional bias: basic residues.

The protein belongs to the universal ribosomal protein uL18 family. Part of the 50S ribosomal subunit; part of the 5S rRNA/L5/L18/L25 subcomplex. Contacts the 5S and 23S rRNAs.

This is one of the proteins that bind and probably mediate the attachment of the 5S RNA into the large ribosomal subunit, where it forms part of the central protuberance. The chain is Large ribosomal subunit protein uL18 from Microcystis aeruginosa (strain NIES-843 / IAM M-2473).